Reading from the N-terminus, the 376-residue chain is Outer membrane porin C (376 aa).

Positions 1–21 (MKLRVLSLMVPALLVAGTAGA) are cleaved as a signal peptide.

The protein belongs to the Gram-negative porin family. As to quaternary structure, homotrimer.

It is found in the cell outer membrane. Functionally, forms pores that allow passive diffusion of small molecules across the outer membrane. This Serratia marcescens protein is Outer membrane porin C (ompC).